Consider the following 69-residue polypeptide: DNA gyrase inhibitor YacG (69 aa).

4 residues coordinate Zn(2+): Cys9, Cys12, Cys28, and Cys32. The disordered stretch occupies residues 48–69; sequence PVSPDAEDELFSGDLEAPHRGH.

This sequence belongs to the DNA gyrase inhibitor YacG family. Interacts with GyrB. Requires Zn(2+) as cofactor.

Inhibits all the catalytic activities of DNA gyrase by preventing its interaction with DNA. Acts by binding directly to the C-terminal domain of GyrB, which probably disrupts DNA binding by the gyrase. The sequence is that of DNA gyrase inhibitor YacG from Pseudomonas syringae pv. syringae (strain B728a).